Reading from the N-terminus, the 619-residue chain is Telomere repeat-binding protein 3 (619 aa).

Residues valine 324–proline 403 form the Ubiquitin-like domain. The region spanning alanine 504–serine 563 is the HTH myb-type domain. The segment at residues tryptophan 532 to valine 559 is a DNA-binding region (H-T-H motif). The segment at glutamine 593 to valine 619 is disordered.

In terms of assembly, homodimer and heterodimer with TRP1. As to expression, expressed ubiquitously. Highest expression in flowers and roots.

The protein resides in the nucleus. Functionally, binds specifically to the plant telomeric double-stranded DNA sequences. At least 2 repeats of telomeric sequences are required for binding. Induces DNA bending. The polypeptide is Telomere repeat-binding protein 3 (TRP3) (Arabidopsis thaliana (Mouse-ear cress)).